Reading from the N-terminus, the 137-residue chain is Holo-[acyl-carrier-protein] synthase (137 aa).

The Mg(2+) site is built by Asp-8 and Glu-57.

The protein belongs to the P-Pant transferase superfamily. AcpS family. Mg(2+) serves as cofactor.

It is found in the cytoplasm. The catalysed reaction is apo-[ACP] + CoA = holo-[ACP] + adenosine 3',5'-bisphosphate + H(+). In terms of biological role, transfers the 4'-phosphopantetheine moiety from coenzyme A to a Ser of acyl-carrier-protein. The chain is Holo-[acyl-carrier-protein] synthase from Cereibacter sphaeroides (strain ATCC 17029 / ATH 2.4.9) (Rhodobacter sphaeroides).